The sequence spans 204 residues: NADH-quinone oxidoreductase subunit C (204 aa).

This sequence belongs to the complex I 30 kDa subunit family. As to quaternary structure, NDH-1 is composed of 14 different subunits. Subunits NuoB, C, D, E, F, and G constitute the peripheral sector of the complex.

Its subcellular location is the cell inner membrane. It carries out the reaction a quinone + NADH + 5 H(+)(in) = a quinol + NAD(+) + 4 H(+)(out). Its function is as follows. NDH-1 shuttles electrons from NADH, via FMN and iron-sulfur (Fe-S) centers, to quinones in the respiratory chain. The immediate electron acceptor for the enzyme in this species is believed to be ubiquinone. Couples the redox reaction to proton translocation (for every two electrons transferred, four hydrogen ions are translocated across the cytoplasmic membrane), and thus conserves the redox energy in a proton gradient. This Rhodopseudomonas palustris (strain ATCC BAA-98 / CGA009) protein is NADH-quinone oxidoreductase subunit C.